The following is a 462-amino-acid chain: Asparagine--tRNA ligase (462 aa).

This sequence belongs to the class-II aminoacyl-tRNA synthetase family. As to quaternary structure, homodimer.

The protein localises to the cytoplasm. It carries out the reaction tRNA(Asn) + L-asparagine + ATP = L-asparaginyl-tRNA(Asn) + AMP + diphosphate + H(+). This chain is Asparagine--tRNA ligase, found in Synechocystis sp. (strain ATCC 27184 / PCC 6803 / Kazusa).